Reading from the N-terminus, the 259-residue chain is Chaplin-C (259 aa).

A signal peptide spans 1-28; it reads MRQATRKGLMTMAAATGVIAAAGGAAHA. The region spanning 39 to 79 is the Chaplin 1 domain; the sequence is SPGVLSGNTVQAPVHVPVNVCGNTVDVVGVLNPAMGNACAN. The span at 84–112 shows a compositional bias: gly residues; sequence ASGGHGGHGGHGGYGDSGGEGGSHGGSHA. 2 disordered regions span residues 84-129 and 154-227; these read ASGG…NHVE and GNDC…ALAE. A Chaplin 2 domain is found at 119-159; the sequence is SPGVGSGNHVEVPIDVPVNVCGNSIDVVGALNPTTGNDCGN. Over residues 180 to 189 the composition is skewed to low complexity; it reads HNPGNPGNPD. The LPXTG sorting signal signature appears at 225–229; it reads LAETG. A Pentaglycyl murein peptidoglycan amidated threonine modification is found at Thr-228. Residues 229 to 259 constitute a propeptide, removed by sortase; that stretch reads GSDLPLGLALPVGAGALLAGTVLYRKARASV.

The protein belongs to the chaplin family. Long chaplin subfamily.

The protein resides in the secreted. It is found in the cell wall. Its function is as follows. One of 8 partially redundant surface-active proteins required for efficient formation of aerial mycelium; the short chaplins assemble into a hydrophobic, amyloidal fibrillar surface layer that envelopes and protects aerial hyphae and spores, presumably anchored to the long chaplins. Chaplins have an overlapping function with the surface-active SapB peptide; chaplins are essential on minimal medium while on rich medium both chaplins and SapB are required for efficient aerial hyphae formation. A minimal chaplin strain capable of forming aerial mycelium/hyphae on minimal medium contains ChpC, ChpE and ChpH. The strain also has restored rodlet formation on the hyphae surface. The long chaplins (ChpA, ChpB, ChpC) are not absolutely necessary for short chaplin localization or rodlet formation, but probably play a role in initiating aerial hyphae development. Chaplins are also involved in cell attachment to a hydrophobic surface. This is Chaplin-C from Streptomyces coelicolor (strain ATCC BAA-471 / A3(2) / M145).